A 130-amino-acid chain; its full sequence is Small ribosomal subunit protein uS9 (130 aa).

This sequence belongs to the universal ribosomal protein uS9 family.

The chain is Small ribosomal subunit protein uS9 from Neisseria meningitidis serogroup C (strain 053442).